We begin with the raw amino-acid sequence, 478 residues long: Growth/differentiation factor 10 (478 aa).

Residues 1–33 (MARGPARTSLGPGSQQLPLLSLLLLLLLRDADG) form the signal peptide. The tract at residues 34–70 (SHTAAARPPPPAAADGLAGDKNPQRSPGDVAAAQSPG) is disordered. Positions 34 to 368 (SHTAAARPPP…EKTMQKARKK (335 aa)) are excised as a propeptide. Residues Asn118, Asn155, and Asn280 are each glycosylated (N-linked (GlcNAc...) asparagine). The tract at residues 267-345 (PFQAGDPEPG…GRKDRRKKGQ (79 aa)) is disordered. A compositionally biased stretch (polar residues) spans 291–301 (TQATGPLQNNE). Positions 331 to 343 (LKPRPGRKDRRKK) are enriched in basic residues. Cystine bridges form between Cys376–Cys443, Cys405–Cys475, and Cys409–Cys477. An N-linked (GlcNAc...) asparagine glycan is attached at Asn469.

It belongs to the TGF-beta family. In terms of assembly, homodimer or heterodimer. Can form a non-covalent complex of the mature region and the pro-region.

The protein localises to the secreted. Its function is as follows. Growth factor involved in osteogenesis and adipogenesis. Plays an inhibitory role in the process of osteoblast differentiation via SMAD2/3 pathway. Plays an inhibitory role in the process of adipogenesis. The protein is Growth/differentiation factor 10 (GDF10) of Bos taurus (Bovine).